Reading from the N-terminus, the 1113-residue chain is Lon protease homolog, mitochondrial (1113 aa).

Residues Met-1–Arg-61 constitute a mitochondrion transit peptide. Residues Ser-42–Ser-196 form a disordered region. Composition is skewed to basic and acidic residues over residues Lys-64–Ala-99, Lys-124–Asn-143, and Asp-178–Leu-192. Residues Val-204–Leu-456 form the Lon N-terminal domain. Gly-609–Thr-616 serves as a coordination point for ATP. The segment covering Leu-828–Thr-858 has biased composition (basic and acidic residues). A disordered region spans residues Leu-828–Val-864. The 187-residue stretch at Thr-898–Asp-1084 folds into the Lon proteolytic domain. Residues Ser-990 and Lys-1033 contribute to the active site.

It belongs to the peptidase S16 family. In terms of assembly, homohexamer or homoheptamer. Organized in a ring with a central cavity.

The protein localises to the mitochondrion matrix. The enzyme catalyses Hydrolysis of proteins in presence of ATP.. In terms of biological role, ATP-dependent serine protease that mediates the selective degradation of misfolded, unassembled or oxidatively damaged polypeptides as well as certain short-lived regulatory proteins in the mitochondrial matrix. May also have a chaperone function in the assembly of inner membrane protein complexes. Participates in the regulation of mitochondrial gene expression and in the maintenance of the integrity of the mitochondrial genome. Binds to mitochondrial DNA in a site-specific manner. In Aspergillus niger (strain ATCC MYA-4892 / CBS 513.88 / FGSC A1513), this protein is Lon protease homolog, mitochondrial (pim1).